The chain runs to 482 residues: MSTMEEEKVISKSTSVDISEGTFDDITIEKKEEAKLVRKLDWYLMPMFSVLYFLSFLDRANIGNAAVVGLKEDLKLQAYQYSAAVSVFYATYITAETPSVLLVKKFGPHYYLSAMIIGWSLVTIFTCFVRHYWSLVLTRLLLGICEGGFFPCLSLYISMTYKREEQGKRLAYLYVCSCFSGAFGGLIATGLTKIPKSSGLPNWGWLYIIEGLISAISALWILFCLPDDPSTARFLNPREKELMKIRAEQRQKYMGSPNFDWTQFRKAFKDPKMYMSCVIQFCQDLVLYGISTFLPSILKLELGYSSLAAQYMSVPVYALGGISVYVICLLSDRTNIRGWFIIGMNFFGLAGFIILLATTNSAANYVATYLIALPLYPTVALNITWINNNMAPHYRRATALGCNQTIGNLAGVIAGQVYRSSPYKLGHGFALGCTVVGTLTATAMRFYLQRQNKIKQEILNGERVDEKKERDGCDALDFVYVL.

12 consecutive transmembrane segments (helical) span residues 40–57, 83–103, 109–129, 140–160, 170–190, 205–225, 278–298, 311–331, 338–358, 366–386, 399–418, and 428–448; these read LDWY…LSFL, AAVS…VLLV, HYYL…TCFV, LLLG…ISMT, LAYL…IATG, WLYI…LFCL, VIQF…PSIL, YMSV…CLLS, GWFI…LLAT, VATY…ITWI, ALGC…GQVY, and GFAL…RFYL.

The protein belongs to the major facilitator superfamily. Allantoate permease family.

Its subcellular location is the endoplasmic reticulum. The protein resides in the membrane. This is an uncharacterized protein from Schizosaccharomyces pombe (strain 972 / ATCC 24843) (Fission yeast).